Here is a 367-residue protein sequence, read N- to C-terminus: Succinyl-diaminopimelate desuccinylase (367 aa).

Histidine 67 serves as a coordination point for Zn(2+). Residue aspartate 69 is part of the active site. Position 98 (aspartate 98) interacts with Zn(2+). The active-site Proton acceptor is the glutamate 128. Zn(2+)-binding residues include glutamate 129, glutamate 157, and histidine 342.

The protein belongs to the peptidase M20A family. DapE subfamily. As to quaternary structure, homodimer. Zn(2+) serves as cofactor. It depends on Co(2+) as a cofactor.

The catalysed reaction is N-succinyl-(2S,6S)-2,6-diaminopimelate + H2O = (2S,6S)-2,6-diaminopimelate + succinate. Its pathway is amino-acid biosynthesis; L-lysine biosynthesis via DAP pathway; LL-2,6-diaminopimelate from (S)-tetrahydrodipicolinate (succinylase route): step 3/3. Functionally, catalyzes the hydrolysis of N-succinyl-L,L-diaminopimelic acid (SDAP), forming succinate and LL-2,6-diaminopimelate (DAP), an intermediate involved in the bacterial biosynthesis of lysine and meso-diaminopimelic acid, an essential component of bacterial cell walls. This Campylobacter hominis (strain ATCC BAA-381 / DSM 21671 / CCUG 45161 / LMG 19568 / NCTC 13146 / CH001A) protein is Succinyl-diaminopimelate desuccinylase.